The following is a 640-amino-acid chain: uncharacterized protein (640 aa).

The 145-residue stretch at 184–328 (VKRDTIFIIK…KVQRSIDTMI (145 aa)) folds into the TIR domain. The segment at 613-640 (LPNDLDDEDEELDDSTLGRPDSDEEGGE) is disordered. Over residues 616–626 (DLDDEDEELDD) the composition is skewed to acidic residues.

This is an uncharacterized protein from Sinorhizobium fredii (strain NBRC 101917 / NGR234).